The following is a 291-amino-acid chain: tRNA pseudouridine synthase B (291 aa).

The active-site Nucleophile is the D41.

Belongs to the pseudouridine synthase TruB family. Type 1 subfamily.

The enzyme catalyses uridine(55) in tRNA = pseudouridine(55) in tRNA. Functionally, responsible for synthesis of pseudouridine from uracil-55 in the psi GC loop of transfer RNAs. The protein is tRNA pseudouridine synthase B of Parasynechococcus marenigrum (strain WH8102).